Consider the following 350-residue polypeptide: MFGLKRNAVIRTQLYCGGAGLGAGSGGASSSGGRLLASGREATTRREGGGGEAGAVIGGSAGASPPTTLAPDARRVARPSPIGAEGPNVSATPPRLLLLAPPCRASPPEEMEGPAADAIMSPEEELDGYEPEPLGKRPAVLPLLELVGEASSGPGMDGSLPSTPPPAEEEEDELYRQSLEIISRYLREQATGAKDAKPLGGSRAASRKALETLQRVGDGVQRNHETAFQGMLRKLDIKNEDDVKSLSRVIVHVFSDGVTNWGRIVTLISFGAFVAKHLKSINQESCIEPLAESITDVLVRTKRDWLVKQRGWDGFVEFFHVEDLEGGIRNVLLAFAGVAGVGAGLAYLIR.

Lys5 is covalently cross-linked (Glycyl lysine isopeptide (Lys-Gly) (interchain with G-Cter in ubiquitin)). The tract at residues 23-95 (AGSGGASSSG…GPNVSATPPR (73 aa)) is disordered. Residues 31-41 (SGGRLLASGRE) are compositionally biased toward low complexity. Positions 50 to 61 (GGEAGAVIGGSA) are enriched in gly residues. The tract at residues 104 to 175 (RASPPEEMEG…PAEEEEDELY (72 aa)) is PEST-like. Ser121 is modified (phosphoserine). A Glycyl lysine isopeptide (Lys-Gly) (interchain with G-Cter in ubiquitin) cross-link involves residue Lys136. Residues 150–169 (ASSGPGMDGSLPSTPPPAEE) form a disordered region. Ser159 is subject to Phosphoserine; by GSK3-alpha and GSK3-beta. At Ser162 the chain carries Phosphoserine. Thr163 is modified (phosphothreonine). Glycyl lysine isopeptide (Lys-Gly) (interchain with G-Cter in ubiquitin) cross-links involve residues Lys194 and Lys197. The short motif at 209 to 223 (ALETLQRVGDGVQRN) is the BH3 element. Positions 252–272 (HVFSDGVTNWGRIVTLISFGA) match the BH1 motif. Residues 304 to 319 (DWLVKQRGWDGFVEFF) carry the BH2 motif. Residues 327–349 (GIRNVLLAFAGVAGVGAGLAYLI) form a helical membrane-spanning segment.

This sequence belongs to the Bcl-2 family. In terms of assembly, interacts with HIF3A (via C-terminus domain). Interacts with BOK, BIK, BAX, BAK1, and TPT1. Interacts with unphosphorylated BAD. Interacts with BMF, BBC3 and PMAIP1. Interacts with BOP. Interacts with BCL2L11; may sequester BCL2L11 to prevent its pro-apoptotic activity. Interacts with GIMAP5 and HSPA8/HSC70; the interaction between HSPA8 and MCL1 is impaired in the absence of GIMAP5. Post-translationally, cleaved by CASP3 during apoptosis, yielding a pro-apoptotic C-terminal fragment. Rapidly degraded in the absence of phosphorylation in the PEST region. In terms of processing, phosphorylated on Ser-159, by GSK3, in response to IL3/interleukin-3 withdrawal. Phosphorylation at Ser-159 induces ubiquitination and proteasomal degradation, abrogating the anti-apoptotic activity. Treatment with taxol or okadaic acid induces phosphorylation on additional sites. Post-translationally, ubiquitinated. Ubiquitination is induced by phosphorylation at Ser-159. Deubiquitinated by USP20; leading to increased stability. Detected in peripheral blood mononuclear cells and bone marrow.

It is found in the membrane. The protein localises to the cytoplasm. It localises to the mitochondrion. The protein resides in the nucleus. Its subcellular location is the nucleoplasm. Functionally, involved in the regulation of apoptosis versus cell survival, and in the maintenance of viability but not of proliferation. Mediates its effects by interactions with a number of other regulators of apoptosis. This is Induced myeloid leukemia cell differentiation protein Mcl-1 homolog (MCL1) from Canis lupus familiaris (Dog).